We begin with the raw amino-acid sequence, 964 residues long: Glycine dehydrogenase (decarboxylating) (964 aa).

The residue at position 710 (lysine 710) is an N6-(pyridoxal phosphate)lysine.

The protein belongs to the GcvP family. The glycine cleavage system is composed of four proteins: P, T, L and H. Requires pyridoxal 5'-phosphate as cofactor.

It carries out the reaction N(6)-[(R)-lipoyl]-L-lysyl-[glycine-cleavage complex H protein] + glycine + H(+) = N(6)-[(R)-S(8)-aminomethyldihydrolipoyl]-L-lysyl-[glycine-cleavage complex H protein] + CO2. Its function is as follows. The glycine cleavage system catalyzes the degradation of glycine. The P protein binds the alpha-amino group of glycine through its pyridoxal phosphate cofactor; CO(2) is released and the remaining methylamine moiety is then transferred to the lipoamide cofactor of the H protein. In Saccharophagus degradans (strain 2-40 / ATCC 43961 / DSM 17024), this protein is Glycine dehydrogenase (decarboxylating).